The primary structure comprises 329 residues: Cathepsin K (329 aa).

Residues Met1–Ala15 form the signal peptide. The propeptide at Leu16 to Arg114 is activation peptide. N-linked (GlcNAc...) asparagine glycosylation is present at Asn103. Disulfide bonds link Cys136/Cys177 and Cys170/Cys210. The active site involves Cys139. Asn213 carries N-linked (GlcNAc...) asparagine glycosylation. The cysteines at positions 269 and 318 are disulfide-linked. Catalysis depends on residues His276 and Asn296.

This sequence belongs to the peptidase C1 family. As to expression, predominantly expressed in bones. Expressed in thyroid epithelial cells.

The protein localises to the lysosome. It localises to the secreted. Its subcellular location is the apical cell membrane. It catalyses the reaction Broad proteolytic activity. With small-molecule substrates and inhibitors, the major determinant of specificity is P2, which is preferably Leu, Met &gt; Phe, and not Arg.. Thiol protease involved in osteoclastic bone resorption. Displays potent endoprotease activity against fibrinogen at acid pH. May play an important role in extracellular matrix degradation. Involved in the release of thyroid hormone thyroxine (T4) by limited proteolysis of TG/thyroglobulin in the thyroid follicle lumen. The protein is Cathepsin K (Ctsk) of Mus musculus (Mouse).